The following is a 729-amino-acid chain: Phenylalanine ammonia-lyase (729 aa).

The active-site Proton donor/acceptor is the Tyr-77. The 5-imidazolinone (Ala-Gly) cross-link spans 182 to 184 (ASG). Ser-183 is modified (2,3-didehydroalanine (Ser)). (E)-cinnamate-binding residues include Asn-241, Gln-336, Arg-342, Asn-372, Lys-443, Glu-471, and Asn-474.

The protein belongs to the PAL/histidase family. In terms of processing, contains an active site 4-methylidene-imidazol-5-one (MIO), which is formed autocatalytically by cyclization and dehydration of residues Ala-Ser-Gly.

Its subcellular location is the cytoplasm. The catalysed reaction is L-phenylalanine = (E)-cinnamate + NH4(+). The protein operates within secondary metabolite biosynthesis. It functions in the pathway phenylpropanoid metabolism; trans-cinnamate biosynthesis; trans-cinnamate from L-phenylalanine: step 1/1. Its function is as follows. Phenylalanine ammonia-lyase; part of the gene cluster that mediates the biosynthesis of squalestatin S1 (SQS1, also known as zaragozic acid A), a heavily oxidized fungal polyketide that offers potent cholesterol lowering activity by targeting squalene synthase (SS). SQS1 is composed of a 2,8-dioxobicyclic[3.2.1]octane-3,4,5-tricarboxyclic acid core that is connected to two lipophilic polyketide arms. These initial steps feature the priming of an unusual benzoic acid starter unit onto the highly reducing polyketide synthase pks2, followed by oxaloacetate extension and product release to generate a tricarboxylic acid containing product. The phenylalanine ammonia lyase (PAL) M7 and the acyl-CoA ligase M9 are involved in transforming phenylalanine into benzoyl-CoA. The citrate synthase-like protein R3 is involved in connecting the C-alpha-carbons of the hexaketide chain and oxaloacetate to afford the tricarboxylic acid unit. The potential hydrolytic enzymes, M8 and M10, are in close proximity to pks2 and may participate in product release. On the other side, the tetraketide arm is synthesized by a the squalestatin tetraketide synthase pks1 and enzymatically esterified to the core in the last biosynthetic step, by the acetyltransferase M4. The biosynthesis of the tetraketide must involve 3 rounds of chain extension. After the first and second rounds methyl-transfer occurs, and in all rounds of extension the ketoreductase and dehydratase are active. The enoyl reductase and C-MeT of pks1 are not active in the final round of extension. The acetyltransferase M4 appears to have a broad substrate selectivity for its acyl CoA substrate, allowing the in vitro synthesis of novel squalestatins. The biosynthesis of SQS1 requires several oxidative steps likely performed by oxidoreductases M1, R1 and R2. Finally, in support of the identification of the cluster as being responsible for SQS1 production, the cluster contains a gene encoding a putative squalene synthase (SS) R6, suggesting a likely mechanism for self-resistance. This Phoma sp. (strain ATCC 20986 / MF5453) protein is Phenylalanine ammonia-lyase.